We begin with the raw amino-acid sequence, 360 residues long: Variable large protein 18 (360 aa).

Positions 1–26 are cleaved as a signal peptide; that stretch reads MRKRISAIINKLNISIMMMIVVLMIG. Residue Cys-27 is the site of N-palmitoyl cysteine attachment. Residue Cys-27 is the site of S-diacylglycerol cysteine attachment.

The protein belongs to the variable large protein (Vlp) family. Alpha subfamily.

The protein resides in the cell outer membrane. In terms of biological role, the Vlp and Vsp proteins are antigenically distinct proteins, only one vlp or vsp gene is transcriptionally active at any one time. Switching between these genes is a mechanism of host immune response evasion. This is Variable large protein 18 from Borrelia hermsii.